The sequence spans 427 residues: Glutamate-1-semialdehyde 2,1-aminomutase (427 aa).

The residue at position 267 (Lys-267) is an N6-(pyridoxal phosphate)lysine.

It belongs to the class-III pyridoxal-phosphate-dependent aminotransferase family. HemL subfamily. In terms of assembly, homodimer. Requires pyridoxal 5'-phosphate as cofactor.

It is found in the cytoplasm. The enzyme catalyses (S)-4-amino-5-oxopentanoate = 5-aminolevulinate. It participates in porphyrin-containing compound metabolism; protoporphyrin-IX biosynthesis; 5-aminolevulinate from L-glutamyl-tRNA(Glu): step 2/2. This chain is Glutamate-1-semialdehyde 2,1-aminomutase, found in Acetivibrio thermocellus (strain ATCC 27405 / DSM 1237 / JCM 9322 / NBRC 103400 / NCIMB 10682 / NRRL B-4536 / VPI 7372) (Clostridium thermocellum).